The sequence spans 249 residues: U2 small nuclear ribonucleoprotein A' (249 aa).

LRR repeat units lie at residues 20–41 (KERELDLRGNKIPVIENLGATE), 43–64 (QFDTIDLSDNEIVKLENFPYLN), 65–87 (RLGTLLINNNRITRINPNLGEFL), and 89–110 (KLHSLVLTNNRLVNLVEIDPLA). One can recognise an LRRCT domain in the interval 123–161 (NNITKKANYRLYVIHKLKSLRVLDFIKIKAKERAEAASL).

Belongs to the U2 small nuclear ribonucleoprotein A family.

Its subcellular location is the nucleus. The protein resides in the nucleus speckle. Its function is as follows. This protein is associated with sn-RNP U2. It helps the A' protein to bind stem loop IV of U2 snRNA. This is U2 small nuclear ribonucleoprotein A' from Arabidopsis thaliana (Mouse-ear cress).